The primary structure comprises 195 residues: MLQFVLASASPARRQLLQSIGINPLVYQSNFDESSVAIADHHELVQTLARCKAEVVANQLAAPALVLGCDSVLVLQGKIYGKPKDPADAIARWQSMRGQSGELLTGHTLIDLYQNKTLVRLEITQVDFAWISDRQIAAYVATGEPLNCAGAFALDGRGGLFVDRIVGCPSNVIGLSLPLLRKMLTALGYSPADCW.

Asp-70 (proton acceptor) is an active-site residue.

Belongs to the Maf family. A divalent metal cation is required as a cofactor.

The protein resides in the cytoplasm. It carries out the reaction a ribonucleoside 5'-triphosphate + H2O = a ribonucleoside 5'-phosphate + diphosphate + H(+). It catalyses the reaction a 2'-deoxyribonucleoside 5'-triphosphate + H2O = a 2'-deoxyribonucleoside 5'-phosphate + diphosphate + H(+). In terms of biological role, nucleoside triphosphate pyrophosphatase. May have a dual role in cell division arrest and in preventing the incorporation of modified nucleotides into cellular nucleic acids. This chain is Nucleoside triphosphate pyrophosphatase, found in Cyanothece sp. (strain PCC 7425 / ATCC 29141).